Reading from the N-terminus, the 446-residue chain is Protein odr-4 homolog (446 aa).

Residues 76 to 96 (ASQVGRMLPGGLMVLGVFLMT) form a helical membrane-spanning segment. Over residues 394 to 415 (HPEKRESEPASQHLESKPENKA) the composition is skewed to basic and acidic residues. A disordered region spans residues 394–417 (HPEKRESEPASQHLESKPENKARS). A helical transmembrane segment spans residues 426 to 446 (GLVISTIVASIAIIISFYYIM).

The protein belongs to the ODR-4 family.

The protein resides in the membrane. Functionally, may play a role in the trafficking of a subset of G-protein coupled receptors. In Xenopus laevis (African clawed frog), this protein is Protein odr-4 homolog (odr4).